The chain runs to 124 residues: ATP synthase subunit H, mitochondrial (124 aa).

The transit peptide at 1–32 directs the protein to the mitochondrion; that stretch reads MFPIASRRILLNASVLPLRLCNRNFTTTRISY. The segment at 89-124 is disordered; it reads NVETAHVAKESEEGESEPIEEDWLVLDDAEETKESH. Acidic residues predominate over residues 100 to 124; sequence EEGESEPIEEDWLVLDDAEETKESH.

The protein belongs to the ATPase h subunit family. F-type ATPases have 2 components, CF(1) - the catalytic core - and CF(0) - the membrane proton channel. In yeast, the dimeric form of ATP synthase consists of 17 polypeptides: alpha, beta, gamma, delta, epsilon, 4 (B), 5 (OSCP), 6 (A), 8, 9 (C), d, E (Tim11), f, g, h, i/j and k.

The protein resides in the mitochondrion. It is found in the mitochondrion inner membrane. Functionally, mitochondrial membrane ATP synthase (F(1)F(0) ATP synthase or Complex V) produces ATP from ADP in the presence of a proton gradient across the membrane which is generated by electron transport complexes of the respiratory chain. F-type ATPases consist of two structural domains, F(1) - containing the extramembraneous catalytic core and F(0) - containing the membrane proton channel, linked together by a central stalk and a peripheral stalk. During catalysis, ATP synthesis in the catalytic domain of F(1) is coupled via a rotary mechanism of the central stalk subunits to proton translocation. Part of the complex F(0) domain. Minor subunit located with subunit a in the membrane. This Saccharomyces cerevisiae (strain ATCC 204508 / S288c) (Baker's yeast) protein is ATP synthase subunit H, mitochondrial (ATP14).